The sequence spans 728 residues: MEETQPPPQPKLPLCDSLMIWLQTFNTASPCQDVKQLTSGVAMAQVLHQIDAAWFNESWLSRIKEDVGDNWRIKASNVKKVLQGIMSYYHEFLGQQISEALIPDLNQITECSDPVELGRLLQLILGCAINCEKKQEHIQNIMTLEESVQHVVMTAIQELMSKEILSSPPNDAVGELEQQLKRALEELQEALAEKEELRQRCEELDMQVTTLQDEKNSLVSENEMMNEKLDQLDGSFDDPNTVVAKKYFHAQLQLEQLQEENFRLEAAKDDYRVHCEELEKQLIEFQHRNDELTSLAEETRALKDEIDVLRATSDKANKLESTVEIYRQKLQDLNDLRKQVKTLQETNMMYMHNTVSLEEELKKANAARTQLETYKRQVQDLHVKLSSESKRADTLAFEMKRLEEKHEALLKEKERLIEQRDTLKETNEELRCSQVQQDHLNQTDASATKSYENLAAEIMPVEYREVFIRLQHENKMLRLQQEGSENERIEELQEQLEQKHRKMNELETEQRLSKERIRELQQQIEDLQKSLQEQGSKSEGESSSKLKQKLEAHMEKLTEVHEELQKKQELIEDLQPDINQNVQKINELEAALQKKDEDMKAMEERYKMYLEKARNVIKTLDPKLNPASAEIMLLRKQLAEKERRIEILESECKVAKFRDYEEKLIVSAWYNKSLAFQKLGMESRLVSGGGACSDTGACTPARSFLAQQRHITNTRRNLSVKVPATTSD.

Met1 carries the post-translational modification N-acetylmethionine. Residues Met1–Glu555 form a sufficient for interaction with microtubules region. One can recognise a Calponin-homology (CH) domain in the interval Leu12–Ala128. 2 coiled-coil regions span residues Pro169 to Gln434 and Leu477 to Arg658. The interval Pro169–Asp444 is sufficient for homodimerization, interaction wit HOOK2, HOOK3 and AP4M1. Ser235 carries the phosphoserine modification. Residues Gln481 to Leu512 are disordered. A compositionally biased stretch (basic and acidic residues) spans Met503–Leu512. A sufficient for interaction with AKTIP and VPS18 region spans residues Phe657–Asp728. Thr699 carries the phosphothreonine modification. Residues Ser719 and Ser727 each carry the phosphoserine modification.

Belongs to the hook family. Self-associates. Component of the FTS/Hook/FHIP complex (FHF complex), composed of AKTIP/FTS, FHIP1B, and one or more members of the Hook family of proteins HOOK1, HOOK2, and HOOK3. Interacts directly with AKTIP/FTS, HOOK2 and HOOK3. Associates with several subunits of the homotypic vesicular sorting complex (the HOPS complex) including VPS16, VPS18, VPS39 and VPS41; these interactions may be indirect. Interacts with CCDC181. Interacts (via coiled-coil region) with RIMBP3 (via C-terminus). Interacts with LRGUK (via guanylate kinase-like domain). Interacts with microtubules. May interact with CLN3. Interacts with AP4M1; the interaction is direct, mediates the interaction between FTS-Hook-FHIP (FHF) complex and AP-4 and the perinuclear distribution of AP-4.

The protein localises to the cytoplasm. The protein resides in the cytoskeleton. Functionally, component of the FTS/Hook/FHIP complex (FHF complex). The FHF complex may function to promote vesicle trafficking and/or fusion via the homotypic vesicular protein sorting complex (the HOPS complex). FHF complex promotes the distribution of AP-4 complex to the perinuclear area of the cell. Required for spermatid differentiation. Probably involved in the positioning of the microtubules of the manchette and the flagellum in relation to the membrane skeleton. The chain is Protein Hook homolog 1 from Homo sapiens (Human).